The primary structure comprises 605 residues: Capsid scaffolding protein (605 aa).

Active-site charge relay system residues include H48, S116, and H139. The interval 235 to 274 is disordered; that stretch reads ASDAPDLQKPDKALQSPPPASTDPATMLSGNAGEGATACG. An interaction with pAP region spans residues 281–300; that stretch reads QDLISVPRNTFMTLLQTNLD. Disordered regions lie at residues 403–431 and 489–588; these read DYVPAPSRSNKRKRDPEEDEEGGGLFPGE and PHQS…KSVS. The short motif at 410–416 is the Nuclear localization signal element; it reads RSNKRKR. Over residues 568-579 the composition is skewed to polar residues; it reads ASASGVAQSKEP. The interaction with major capsid protein stretch occupies residues 585-605; the sequence is KSVSAHLKSIFCEELLNKRVA.

Belongs to the herpesviridae capsid scaffolding protein family. Homomultimer. Interacts with major capsid protein. In terms of assembly, exists in a monomer-dimer equilibrium with the dimer being the active species. Post-translationally, capsid scaffolding protein is cleaved by assemblin after formation of the spherical procapsid. As a result, the capsid obtains its mature, icosahedral shape. Cleavages occur at two or more sites: release (R-site) and maturation (M-site).

It is found in the host cytoplasm. The protein localises to the host nucleus. The catalysed reaction is Cleaves -Ala-|-Ser- and -Ala-|-Ala- bonds in the scaffold protein.. In terms of biological role, acts as a scaffold protein by binding major capsid protein in the cytoplasm, inducing the nuclear localization of both proteins. Multimerizes in the nucleus such as major capsid protein forms the icosahedral T=16 capsid. Autocatalytic cleavage releases the assembly protein, and subsequently abolishes interaction with major capsid protein. Cleavages products are evicted from the capsid before or during DNA packaging. Functionally, protease that plays an essential role in virion assembly within the nucleus. Catalyzes the cleavage of the assembly protein after formation of the spherical procapsid. By that cleavage, the capsid matures and gains its icosahedral shape. The cleavage sites seem to include -Ala-Ser-, -Ala-Ala-, as well as Ala-Thr bonds. Assemblin and cleavages products are evicted from the capsid before or during DNA packaging. Its function is as follows. Plays a major role in capsid assembly. Acts as a scaffold protein by binding major capsid protein. Multimerizes in the nucleus such as major capsid protein forms the icosahedral T=16 capsid. Cleaved by assemblin after capsid completion. The cleavages products are evicted from the capsid before or during DNA packaging. The chain is Capsid scaffolding protein from Homo sapiens (Human).